Consider the following 45-residue polypeptide: Cytochrome c6 (45 aa).

Positions 12, 15, and 16 each coordinate heme c.

It belongs to the cytochrome c family. PetJ subfamily. Monomer. Post-translationally, binds 1 heme c group covalently per subunit.

It is found in the cellular thylakoid lumen. In terms of biological role, functions as an electron carrier between membrane-bound cytochrome b6-f and photosystem I in oxygenic photosynthesis. In Prochlorothrix hollandica, this protein is Cytochrome c6 (petJ).